The sequence spans 272 residues: Type II secretion system protein C (272 aa).

The Cytoplasmic portion of the chain corresponds to M1–R16. A helical transmembrane segment spans residues I17–W35. The Periplasmic segment spans residues R36 to E272.

It belongs to the GSP C family.

Its subcellular location is the cell inner membrane. Its function is as follows. Involved in a type II secretion system (T2SS, formerly general secretion pathway, GSP) for the export of proteins. Required for the translocation of the multiple pectic enzymes. The chain is Type II secretion system protein C (outC) from Dickeya dadantii (strain 3937) (Erwinia chrysanthemi (strain 3937)).